Reading from the N-terminus, the 203-residue chain is LexA repressor (203 aa).

The H-T-H motif DNA-binding region spans 28 to 48; sequence RAEIASQLGFRSPNAAEEHLK. Catalysis depends on for autocatalytic cleavage activity residues Ser120 and Lys157.

This sequence belongs to the peptidase S24 family. In terms of assembly, homodimer.

It catalyses the reaction Hydrolysis of Ala-|-Gly bond in repressor LexA.. Represses a number of genes involved in the response to DNA damage (SOS response), including recA and lexA. Binds to the 16 bp palindromic sequence 5'-CTGTATATATATACAG-3'. In the presence of single-stranded DNA, RecA interacts with LexA causing an autocatalytic cleavage which disrupts the DNA-binding part of LexA, leading to derepression of the SOS regulon and eventually DNA repair. The protein is LexA repressor of Proteus mirabilis (strain HI4320).